A 1440-amino-acid chain; its full sequence is Gag-Pro-Pol polyprotein (1440 aa).

The N-myristoyl glycine; by host moiety is linked to residue glycine 2. Positions 93 to 117 (AREAPPSAPPADDPQKPPPYPEHAQ) are disordered. The PTAP/PSAP motif signature appears at 98 to 101 (PSAP). Over residues 98-113 (PSAPPADDPQKPPPYP) the composition is skewed to pro residues. The PPXY motif signature appears at 109-112 (PPPY). CCHC-type zinc fingers lie at residues 349–366 (QPCF…DCKQ) and 372–389 (GPCP…DCPQ). A Peptidase A2 domain is found at 457–535 (VQALLDTGAD…DQWTILGRDA (79 aa)). Aspartate 462 serves as the catalytic For protease activity; shared with dimeric partner. Positions 593–783 (LEAKHIEPYQ…GSIHFLGQVI (191 aa)) constitute a Reverse transcriptase domain. The Mg(2+) site is built by aspartate 659, aspartate 734, aspartate 735, aspartate 1019, glutamate 1052, aspartate 1074, aspartate 1135, aspartate 1208, and aspartate 1265. The RNase H type-1 domain maps to 1010–1143 (IDHAPCLFSD…TDALMLAPLL (134 aa)). The Integrase catalytic domain maps to 1197–1366 (RGHAPNVIWQ…PSIPENTLPP (170 aa)). The segment at residues 1371–1420 (KWYYYKIPGLTNPRWSGPVQSLKEAAGAALIPVGGSHLWIPWRLLKRGIC) is a DNA-binding region (integrase-type).

In terms of assembly, interacts with human TSG101. This interaction is essential for budding and release of viral particles. The cofactor is Mg(2+). Post-translationally, specific enzymatic cleavages by the viral protease yield mature proteins. The polyprotein is cleaved during and after budding, this process is termed maturation. The protease is autoproteolytically processed at its N- and C-termini.

It localises to the virion. The catalysed reaction is Endonucleolytic cleavage to 5'-phosphomonoester.. It catalyses the reaction DNA(n) + a 2'-deoxyribonucleoside 5'-triphosphate = DNA(n+1) + diphosphate. Its function is as follows. Matrix protein p19 targets Gag, Gag-Pro and Gag-Pro-Pol polyproteins to the plasma membrane via a multipartite membrane binding signal, that includes its myristoylated N-terminus. Also mediates nuclear localization of the preintegration complex. In terms of biological role, capsid protein p24 forms the conical core of the virus that encapsulates the genomic RNA-nucleocapsid complex. Nucleocapsid protein p15 is involved in the packaging and encapsidation of two copies of the genome. Functionally, the aspartyl protease mediates proteolytic cleavages of Gag, Gag-Pro and Gag-Pro-Pol polyproteins during or shortly after the release of the virion from the plasma membrane. Cleavages take place as an ordered, step-wise cascade to yield mature proteins. This process is called maturation. Displays maximal activity during the budding process just prior to particle release from the cell. Hydrolyzes host EIF4GI in order to shut off the capped cellular mRNA translation. The resulting inhibition of cellular protein synthesis serves to ensure maximal viral gene expression and to evade host immune response. Its function is as follows. Reverse transcriptase (RT) is a multifunctional enzyme that converts the viral RNA genome into dsDNA in the cytoplasm, shortly after virus entry into the cell. This enzyme displays a DNA polymerase activity that can copy either DNA or RNA templates, and a ribonuclease H (RNase H) activity that cleaves the RNA strand of RNA-DNA heteroduplexes in a partially processive 3' to 5'-endonucleasic mode. Conversion of viral genomic RNA into dsDNA requires many steps. A tRNA-Pro binds to the primer-binding site (PBS) situated at the 5'-end of the viral RNA. RT uses the 3' end of the tRNA primer to perform a short round of RNA-dependent minus-strand DNA synthesis. The reading proceeds through the U5 region and ends after the repeated (R) region which is present at both ends of viral RNA. The portion of the RNA-DNA heteroduplex is digested by the RNase H, resulting in a ssDNA product attached to the tRNA primer. This ssDNA/tRNA hybridizes with the identical R region situated at the 3' end of viral RNA. This template exchange, known as minus-strand DNA strong stop transfer, can be either intra- or intermolecular. RT uses the 3' end of this newly synthesized short ssDNA to perform the RNA-dependent minus-strand DNA synthesis of the whole template. RNase H digests the RNA template except for a polypurine tract (PPT) situated at the 5' end of the genome. It is not clear if both polymerase and RNase H activities are simultaneous. RNase H probably can proceed both in a polymerase-dependent (RNA cut into small fragments by the same RT performing DNA synthesis) and a polymerase-independent mode (cleavage of remaining RNA fragments by free RTs). Secondly, RT performs DNA-directed plus-strand DNA synthesis using the PPT that has not been removed by RNase H as primer. PPT and tRNA primers are then removed by RNase H. The 3' and 5' ssDNA PBS regions hybridize to form a circular dsDNA intermediate. Strand displacement synthesis by RT to the PBS and PPT ends produces a blunt ended, linear dsDNA copy of the viral genome that includes long terminal repeats (LTRs) at both ends. In terms of biological role, integrase catalyzes viral DNA integration into the host chromosome, by performing a series of DNA cutting and joining reactions. This enzyme activity takes place after virion entry into a cell and reverse transcription of the RNA genome in dsDNA. The first step in the integration process is 3' processing. This step requires a complex comprising the viral genome, matrix protein, and integrase. This complex is called the pre-integration complex (PIC). The integrase protein removes 2 nucleotides from each 3' end of the viral DNA, leaving recessed dinucleotides OH's at the 3' ends. In the second step, the PIC access cell chromosomes during cell division. The third step, termed strand transfer, the integrase protein joins the previously processed 3' ends to the 5'-ends of strands of target cellular DNA at the site of integration. The 5'-ends are produced by integrase-catalyzed staggered cuts, 5 bp apart. A Y-shaped, gapped, recombination intermediate results, with the 5'-ends of the viral DNA strands and the 3' ends of target DNA strands remaining unjoined, flanking a gap of 5 bp. The last step is viral DNA integration into host chromosome. This involves host DNA repair synthesis in which the 5 bp gaps between the unjoined strands (see above) are filled in and then ligated. The protein is Gag-Pro-Pol polyprotein (gag-pro-pol) of Human T-cell leukemia virus 3 (strain Pyl43) (HTLV-3).